The primary structure comprises 193 residues: Large ribosomal subunit protein bL12cy (193 aa).

The N-terminal 59 residues, 1 to 59 (MAATTLSIATTIRSSSFSSGLASAHHFPSRPLSIEFPFSFGVSSSSTLSHRAIYLHPIS), are a transit peptide targeting the chloroplast. Residues 170 to 187 (GVTKDEAEEDKTQLEEAG) show a composition bias toward basic and acidic residues. A disordered region spans residues 170–193 (GVTKDEAEEDKTQLEEAGAKVSIV).

It belongs to the bacterial ribosomal protein bL12 family.

It is found in the plastid. The protein localises to the chloroplast. This is Large ribosomal subunit protein bL12cy (RPL12B) from Arabidopsis thaliana (Mouse-ear cress).